A 343-amino-acid chain; its full sequence is Ribosomal RNA-processing protein 8 (343 aa).

The segment at 1–123 (MGKKRKITDE…NDDVAAAPEE (123 aa)) is disordered. Residues 7-33 (ITDEKDAQHVPAEKREKVENWLKKSTE) show a composition bias toward basic and acidic residues. 2 stretches are compositionally biased toward basic residues: residues 45 to 59 (KKKR…KLAA) and 89 to 101 (KKKR…KKKF). Positions 112–123 (TENDDVAAAPEE) are enriched in acidic residues. Residues His-169, Gly-204, Asp-224, Asp-236, Met-237, and Cys-253 each coordinate S-adenosyl-L-methionine.

It belongs to the methyltransferase superfamily. RRP8 family.

It is found in the nucleus. Its subcellular location is the nucleolus. Probable methyltransferase required to silence rDNA. Involved in regulation of antisense ribosomal siRNA production. Required for the N1-methyladenosine modification of 26S rRNAs. This chain is Ribosomal RNA-processing protein 8 (rrp-8), found in Caenorhabditis elegans.